We begin with the raw amino-acid sequence, 432 residues long: Glutamyl-tRNA reductase (432 aa).

Residues 49–52 (TCNR), Ser-101, 106–108 (ESQ), and Gln-112 each bind substrate. Cys-50 (nucleophile) is an active-site residue. 181–186 (GTGETI) provides a ligand contact to NADP(+). The interval 410–432 (KPGYHHPTLQTTIVKTDETDPAS) is disordered.

It belongs to the glutamyl-tRNA reductase family. Homodimer.

It catalyses the reaction (S)-4-amino-5-oxopentanoate + tRNA(Glu) + NADP(+) = L-glutamyl-tRNA(Glu) + NADPH + H(+). The protein operates within porphyrin-containing compound metabolism; protoporphyrin-IX biosynthesis; 5-aminolevulinate from L-glutamyl-tRNA(Glu): step 1/2. Catalyzes the NADPH-dependent reduction of glutamyl-tRNA(Glu) to glutamate 1-semialdehyde (GSA). This chain is Glutamyl-tRNA reductase, found in Xylella fastidiosa (strain 9a5c).